A 330-amino-acid polypeptide reads, in one-letter code: Aspartate--ammonia ligase (330 aa).

The protein belongs to the class-II aminoacyl-tRNA synthetase family. AsnA subfamily.

Its subcellular location is the cytoplasm. It carries out the reaction L-aspartate + NH4(+) + ATP = L-asparagine + AMP + diphosphate + H(+). Its pathway is amino-acid biosynthesis; L-asparagine biosynthesis; L-asparagine from L-aspartate (ammonia route): step 1/1. In Escherichia coli O7:K1 (strain IAI39 / ExPEC), this protein is Aspartate--ammonia ligase.